An 85-amino-acid polypeptide reads, in one-letter code: Small ribosomal subunit protein uS17 (85 aa).

It belongs to the universal ribosomal protein uS17 family. Part of the 30S ribosomal subunit.

In terms of biological role, one of the primary rRNA binding proteins, it binds specifically to the 5'-end of 16S ribosomal RNA. The sequence is that of Small ribosomal subunit protein uS17 from Anaeromyxobacter sp. (strain Fw109-5).